The chain runs to 565 residues: Phosphoenolpyruvate-protein phosphotransferase (565 aa).

The active-site Tele-phosphohistidine intermediate is His191. Phosphoenolpyruvate is bound by residues Arg289 and Arg325. The Mg(2+) site is built by Glu427 and Asp451. Phosphoenolpyruvate-binding positions include 450–451 and Arg461; that span reads ND. Cys498 acts as the Proton donor in catalysis.

This sequence belongs to the PEP-utilizing enzyme family. As to quaternary structure, homodimer. Requires Mg(2+) as cofactor.

It is found in the cytoplasm. The catalysed reaction is L-histidyl-[protein] + phosphoenolpyruvate = N(pros)-phospho-L-histidyl-[protein] + pyruvate. In terms of biological role, general (non sugar-specific) component of the phosphoenolpyruvate-dependent sugar phosphotransferase system (sugar PTS). This major carbohydrate active-transport system catalyzes the phosphorylation of incoming sugar substrates concomitantly with their translocation across the cell membrane. Enzyme I transfers the phosphoryl group from phosphoenolpyruvate (PEP) to the phosphoryl carrier protein (HPr). The polypeptide is Phosphoenolpyruvate-protein phosphotransferase (ptsI) (Haloferax volcanii (strain ATCC 29605 / DSM 3757 / JCM 8879 / NBRC 14742 / NCIMB 2012 / VKM B-1768 / DS2) (Halobacterium volcanii)).